A 164-amino-acid chain; its full sequence is Thiol peroxidase (164 aa).

Residues 18 to 163 (VKTGETAPEF…FESALEAYRN (146 aa)) enclose the Thioredoxin domain. C60 functions as the Cysteine sulfenic acid (-SOH) intermediate in the catalytic mechanism. A disulfide bridge links C60 with C93.

Belongs to the peroxiredoxin family. Tpx subfamily. In terms of assembly, homodimer.

It carries out the reaction a hydroperoxide + [thioredoxin]-dithiol = an alcohol + [thioredoxin]-disulfide + H2O. Functionally, thiol-specific peroxidase that catalyzes the reduction of hydrogen peroxide and organic hydroperoxides to water and alcohols, respectively. Plays a role in cell protection against oxidative stress by detoxifying peroxides. In Staphylococcus saprophyticus subsp. saprophyticus (strain ATCC 15305 / DSM 20229 / NCIMB 8711 / NCTC 7292 / S-41), this protein is Thiol peroxidase.